The chain runs to 273 residues: Diaminopimelate epimerase (273 aa).

The substrate site is built by Asn-11 and Asn-60. Cys-69 acts as the Proton donor in catalysis. Residues 70-71, Asn-181, and 199-200 each bind substrate; these read GN and ER. Cys-209 (proton acceptor) is an active-site residue. Residue 210-211 participates in substrate binding; sequence GT.

It belongs to the diaminopimelate epimerase family. As to quaternary structure, homodimer.

The protein resides in the cytoplasm. It catalyses the reaction (2S,6S)-2,6-diaminopimelate = meso-2,6-diaminopimelate. The protein operates within amino-acid biosynthesis; L-lysine biosynthesis via DAP pathway; DL-2,6-diaminopimelate from LL-2,6-diaminopimelate: step 1/1. Its function is as follows. Catalyzes the stereoinversion of LL-2,6-diaminopimelate (L,L-DAP) to meso-diaminopimelate (meso-DAP), a precursor of L-lysine and an essential component of the bacterial peptidoglycan. This chain is Diaminopimelate epimerase, found in Helicobacter pylori (strain Shi470).